We begin with the raw amino-acid sequence, 189 residues long: UPF0398 protein BH1768 (189 aa).

It belongs to the UPF0398 family.

The protein is UPF0398 protein BH1768 of Halalkalibacterium halodurans (strain ATCC BAA-125 / DSM 18197 / FERM 7344 / JCM 9153 / C-125) (Bacillus halodurans).